Here is a 134-residue protein sequence, read N- to C-terminus: Phosphoribosyl-AMP cyclohydrolase (134 aa).

Residue aspartate 80 coordinates Mg(2+). Cysteine 81 serves as a coordination point for Zn(2+). Residues aspartate 82 and aspartate 84 each coordinate Mg(2+). Residues cysteine 98 and cysteine 105 each coordinate Zn(2+).

Belongs to the PRA-CH family. In terms of assembly, homodimer. The cofactor is Mg(2+). Zn(2+) serves as cofactor.

The protein resides in the cytoplasm. The catalysed reaction is 1-(5-phospho-beta-D-ribosyl)-5'-AMP + H2O = 1-(5-phospho-beta-D-ribosyl)-5-[(5-phospho-beta-D-ribosylamino)methylideneamino]imidazole-4-carboxamide. It functions in the pathway amino-acid biosynthesis; L-histidine biosynthesis; L-histidine from 5-phospho-alpha-D-ribose 1-diphosphate: step 3/9. Catalyzes the hydrolysis of the adenine ring of phosphoribosyl-AMP. This chain is Phosphoribosyl-AMP cyclohydrolase, found in Bordetella petrii (strain ATCC BAA-461 / DSM 12804 / CCUG 43448).